We begin with the raw amino-acid sequence, 762 residues long: ABC-type oligopeptide transporter ABCB9 (762 aa).

A run of 8 helical transmembrane segments spans residues 7–27 (VVVT…IYAF), 47–67 (VLDL…ATIG), 84–104 (LVIT…LLLF), 116–136 (FWAL…LWGL), 181–201 (VAFL…ETFL), 221–241 (FTTA…AAGI), 315–335 (VFMF…FPII), and 412–432 (SGLT…HLVI). Residues 184 to 467 (LVAASFFLIV…VGSVYSGLMQ (284 aa)) form the ABC transmembrane type-1 domain. The ABC transporter domain occupies 500 to 736 (VDFENVTFTY…GGLYAKLVQR (237 aa)). Position 535–542 (535–542 (GPSGSGKS)) interacts with ATP.

This sequence belongs to the ABC transporter superfamily. ABCB family. MHC peptide exporter (TC 3.A.1.209) subfamily. Homodimer. Interacts (via TMD0 region) with LAMP1; this interaction strongly stabilizes ABCB9 and protects ABCB9 against lysosomal degradation. Interacts (via TMD0 region) with LAMP2 (isoform LAMP-2B). Interacts (via TMD0) with YIF1B; this interaction allows (but is not essential) the ER-to-Golgi trafficking and strongly depends on a salt bridge within TMD0. As to expression, found in testis, particularly in the Sertoli cells of the seminiferous tubules. Also expressed in kidney, brain, heart, lung, spleen, thymus, intestine and testis. Higher expression detected in brain and testis than in thymus and intestine.

Its subcellular location is the lysosome membrane. It catalyses the reaction a [oligopeptide](in) + ATP + H2O = a [oligopeptide](out) + ADP + phosphate + H(+). ATP-dependent low-affinity peptide transporter which translocates a broad spectrum of peptides from the cytosol to the lysosomal lumen for degradation. Displays a broad peptide length specificity from 6-mer up to at least 59-mer peptides with an optimum of 23-mers. Binds and transports smaller and larger peptides with the same affinity. Favors positively charged, aromatic or hydrophobic residues in the N- and C-terminal positions whereas negatively charged residues as well as asparagine and methionine are not favored. The sequence is that of ABC-type oligopeptide transporter ABCB9 from Rattus norvegicus (Rat).